The chain runs to 94 residues: DNA-directed RNA polymerase subunit omega (94 aa).

This sequence belongs to the RNA polymerase subunit omega family. As to quaternary structure, the RNAP catalytic core consists of 2 alpha, 1 beta, 1 beta' and 1 omega subunit. When a sigma factor is associated with the core the holoenzyme is formed, which can initiate transcription.

It carries out the reaction RNA(n) + a ribonucleoside 5'-triphosphate = RNA(n+1) + diphosphate. Its function is as follows. Promotes RNA polymerase assembly. Latches the N- and C-terminal regions of the beta' subunit thereby facilitating its interaction with the beta and alpha subunits. This is DNA-directed RNA polymerase subunit omega from Frankia alni (strain DSM 45986 / CECT 9034 / ACN14a).